The primary structure comprises 467 residues: Cytochrome c-552 (467 aa).

The first 27 residues, 1-27 (MMKKMTGKSFALSALVAASFMAAGAMA), serve as a signal peptide directing secretion. Heme c is bound at residue histidine 87. Residues cysteine 115, cysteine 118, and lysine 119 each coordinate heme. Positions 153, 156, 157, 195, 198, and 199 each coordinate heme c. Glutamate 201, tyrosine 202, lysine 250, and glutamine 252 together coordinate Ca(2+). Tyrosine 202 is a binding site for substrate. Histidine 253 provides a ligand contact to substrate. Residues histidine 264, cysteine 271, cysteine 274, histidine 275, histidine 290, cysteine 303, cysteine 306, histidine 307, and histidine 382 each contribute to the heme c site.

This sequence belongs to the cytochrome c-552 family. The cofactor is Ca(2+). Requires heme c as cofactor.

It is found in the periplasm. The enzyme catalyses 6 Fe(III)-[cytochrome c] + NH4(+) + 2 H2O = 6 Fe(II)-[cytochrome c] + nitrite + 8 H(+). Its pathway is nitrogen metabolism; nitrate reduction (assimilation). Functionally, catalyzes the reduction of nitrite to ammonia, consuming six electrons in the process. The polypeptide is Cytochrome c-552 (Shewanella sp. (strain W3-18-1)).